Consider the following 335-residue polypeptide: MWIHFAPLKIPFSRRLQTGAVLQWAVSFLAMAQCCIALYILLLFSRYWYLAVLYGVWLYIDWDTPSKGGRRSNWVRSWTVWKYFAEYFPIKLLCTAPLDPKYNYIMGFHPHGVLVVGAFGNFCTEGTGFSRLFPGLTPHLLMLPAWFRVPFFREYIMSGSLVSSDRSSAHHLLSQKSGGQALVIAVGGPPEALDAKPGELTLQLLNRTGFIKMALTHGAHLVPVLSFGENDLYNQVNNPRGSLLRATQEKLQKIFGIALPLFHGRGVFQYSWGLLPHRRPIYTVVGSPIHVTKTPCPTREQISSLHSLYIAKLRDLFETHKGNYGIPEDRSLVLC.

A run of 2 helical transmembrane segments spans residues 24–44 and 104–124; these read WAVS…LLLF and YIMG…NFCT. Asn-206 carries N-linked (GlcNAc...) asparagine glycosylation.

Belongs to the diacylglycerol acyltransferase family.

The protein localises to the endoplasmic reticulum membrane. It is found in the cytoplasm. The protein resides in the perinuclear region. It catalyses the reaction a 2-acylglycerol + an acyl-CoA = a 1,2-diacylglycerol + CoA. The catalysed reaction is a 2-acylglycerol + an acyl-CoA = a 1,2-diacyl-sn-glycerol + CoA. It carries out the reaction a 2-acylglycerol + an acyl-CoA = a 2,3-diacyl-sn-glycerol + CoA. The enzyme catalyses a 1-acylglycerol + an acyl-CoA = a 1,2-diacylglycerol + CoA. It catalyses the reaction a 1-acylglycerol + an acyl-CoA = a 1,3-diacylglycerol + CoA. The catalysed reaction is 1-O-alkylglycerol + an acyl-CoA = 1-O-alkyl-3-acylglycerol + CoA. It carries out the reaction an acyl-CoA + a 1,2-diacyl-sn-glycerol = a triacyl-sn-glycerol + CoA. It functions in the pathway glycerolipid metabolism; triacylglycerol biosynthesis. In terms of biological role, involved in glycerolipid synthesis and lipid metabolism. Catalyzes the formation of diacylglycerol, the precursor of triacylglycerol, by transferring the acyl chain of a fatty acyl-CoA to a monoacylglycerol. Plays a central role in absorption of dietary fat in the small intestine by catalyzing the resynthesis of triacylglycerol in enterocytes. Has a preference toward monoacylglycerols containing unsaturated fatty acids in an order of C18:3 &gt; C18:2 &gt; C18:1 &gt; C18:0 at sn-2. Able to use 1-monoalkylglycerol (1-MAkG, 1-O-alkylglycerol) as an acyl acceptor for the synthesis of monoalkyl-monoacylglycerol (MAMAG, 1-O-alkyl-3-acylglycerol or 1-O-alkyl-2-acylglycerol) and subsequently, with lower efficiency, may add another acyl chain producing monoalkyl-diacylglycerol (MADAG, 1-O-alkyl-2,3-diacylglycerol). Possesses weak but significant activity with diacylglycerol as substrate, producing triacylglycerol (triacyl-sn-glycerol). The protein is 2-acylglycerol O-acyltransferase 2 (mogat2) of Xenopus tropicalis (Western clawed frog).